The sequence spans 308 residues: 4-hydroxyproline 2-epimerase (308 aa).

Residue cysteine 88 is the Proton acceptor of the active site. Residues glycine 89 to histidine 90, histidine 208, and aspartate 232 each bind substrate. Cysteine 236 (proton donor) is an active-site residue. Glycine 237–threonine 238 is a binding site for substrate.

Belongs to the proline racemase family.

The enzyme catalyses trans-4-hydroxy-L-proline = cis-4-hydroxy-D-proline. Functionally, catalyzes the epimerization of trans-4-hydroxy-L-proline (t4LHyp) to cis-4-hydroxy-D-proline (c4DHyp). Is likely involved in a degradation pathway that converts t4LHyp to alpha-ketoglutarate. Can also catalyze the epimerization of trans-3-hydroxy-L-proline (t3LHyp) to cis-3-hydroxy-D-proline (c3DHyp), albeit with 19-fold lower efficiency. Displays no proline racemase activity. This is 4-hydroxyproline 2-epimerase from Chromobacterium violaceum (strain ATCC 12472 / DSM 30191 / JCM 1249 / CCUG 213 / NBRC 12614 / NCIMB 9131 / NCTC 9757 / MK).